We begin with the raw amino-acid sequence, 335 residues long: MAVKIGINGFGRIGRNVFRAALKNDNVEVVAINDLTDANMLAHLLKYDSVHGKLDAEVVVDGSNLVVNGKTIEISAERDPAQLSWGKQGVEIVVESTGFFTKRADAAKHLEAGAKKVIISAPASDEDITIVMGVNEDKYDAANHNVISNASCTTNCLAPFAKVLNDKFGLKRGMMTTVHSYTNDQQILDLPHKDYRRARAAAENIIPTSTGAAKAVSLVLPELKGKLNGGAMRVPTPNVSLVDLVAELDKEVTVEDVNNALKEAAEGDLKGILGYSEEPLVSGDYNGNINSSTIDALSTMVMEGNMVKVISWYDNESGYSNRVVDLAQYIAAKGL.

NAD(+)-binding positions include 12–13, aspartate 34, arginine 78, and serine 120; that span reads RI. Residues 151 to 153 and threonine 182 contribute to the D-glyceraldehyde 3-phosphate site; that span reads SCT. The active-site Nucleophile is the cysteine 152. Asparagine 183 lines the NAD(+) pocket. Residues arginine 197, 210–211, and arginine 233 contribute to the D-glyceraldehyde 3-phosphate site; that span reads TG. An NAD(+)-binding site is contributed by asparagine 315.

This sequence belongs to the glyceraldehyde-3-phosphate dehydrogenase family. As to quaternary structure, homotetramer.

Its subcellular location is the cytoplasm. The enzyme catalyses D-glyceraldehyde 3-phosphate + phosphate + NAD(+) = (2R)-3-phospho-glyceroyl phosphate + NADH + H(+). Its pathway is carbohydrate degradation; glycolysis; pyruvate from D-glyceraldehyde 3-phosphate: step 1/5. Catalyzes the oxidative phosphorylation of glyceraldehyde 3-phosphate (G3P) to 1,3-bisphosphoglycerate (BPG) using the cofactor NAD. The first reaction step involves the formation of a hemiacetal intermediate between G3P and a cysteine residue, and this hemiacetal intermediate is then oxidized to a thioester, with concomitant reduction of NAD to NADH. The reduced NADH is then exchanged with the second NAD, and the thioester is attacked by a nucleophilic inorganic phosphate to produce BPG. This Priestia megaterium (strain DSM 319 / IMG 1521) (Bacillus megaterium) protein is Glyceraldehyde-3-phosphate dehydrogenase (gap).